Reading from the N-terminus, the 788-residue chain is Cadherin-10 (788 aa).

Positions 1 to 22 are cleaved as a signal peptide; the sequence is MTIHQFLLLFLFWVCLPHFCSP. Positions 23–54 are excised as a propeptide; that stretch reads EIMFRRTPVPQQRILSSRVPRSDGKILHRQKR. 5 consecutive Cadherin domains span residues 55 to 160, 161 to 269, 270 to 384, 385 to 487, and 488 to 606; these read GWMW…EPTF, PEEI…PPRF, PQNT…PPVF, SRSS…DNAP, and QFAV…LLLP. Topologically, residues 55–613 are extracellular; it reads GWMWNQFFLL…LLPAGLSTGA (559 aa). An N-linked (GlcNAc...) asparagine glycan is attached at Asn256. N-linked (GlcNAc...) asparagine glycosylation is found at Asn438, Asn456, and Asn534. A helical transmembrane segment spans residues 614 to 634; that stretch reads LIAILLCIIILLVIVVLFAAL. The Cytoplasmic portion of the chain corresponds to 635 to 788; it reads KRQRKKEPLI…YGGGESDKDS (154 aa). 2 positions are modified to phosphoserine: Ser784 and Ser788.

As to expression, predominantly expressed in brain. Also found in adult and fetal kidney. Very low levels detected in prostate and fetal lung.

The protein resides in the cell membrane. Its function is as follows. Cadherins are calcium-dependent cell adhesion proteins. They preferentially interact with themselves in a homophilic manner in connecting cells; cadherins may thus contribute to the sorting of heterogeneous cell types. This Homo sapiens (Human) protein is Cadherin-10 (CDH10).